A 175-amino-acid chain; its full sequence is Myosin regulatory light chain 2, atrial isoform (175 aa).

Ala2 bears the N-acetylalanine mark. Residues Ser22 and Ser23 each carry the phosphoserine modification. 3 consecutive EF-hand domains span residues 32-67 (AQIQ…LGKV), 102-137 (DPEE…QADK), and 138-173 (FSPA…GDEK). 4 residues coordinate Ca(2+): Asp45, Asn47, Asp49, and Asp56.

As to quaternary structure, myosin is a hexamer of 2 heavy chains and 4 light chains.

In Sus scrofa (Pig), this protein is Myosin regulatory light chain 2, atrial isoform (MYL7).